The following is a 169-amino-acid chain: Sec-independent protein translocase protein TatB (169 aa).

A helical membrane pass occupies residues 2–22 (SPGIGMPELLVVLVLALVVVG). Positions 106–169 (NQAETDADKA…AKPVDEIKGR (64 aa)) are disordered.

Belongs to the TatB family. In terms of assembly, the Tat system comprises two distinct complexes: a TatABC complex, containing multiple copies of TatA, TatB and TatC subunits, and a separate TatA complex, containing only TatA subunits. Substrates initially bind to the TatABC complex, which probably triggers association of the separate TatA complex to form the active translocon.

The protein resides in the cell inner membrane. In terms of biological role, part of the twin-arginine translocation (Tat) system that transports large folded proteins containing a characteristic twin-arginine motif in their signal peptide across membranes. Together with TatC, TatB is part of a receptor directly interacting with Tat signal peptides. TatB may form an oligomeric binding site that transiently accommodates folded Tat precursor proteins before their translocation. The chain is Sec-independent protein translocase protein TatB from Maricaulis maris (strain MCS10) (Caulobacter maris).